The primary structure comprises 340 residues: Eukaryotic translation initiation factor 3 subunit I (340 aa).

WD repeat units follow at residues 8 to 47 (GHER…RLGT), 50 to 89 (GHQG…CVKV), 91 to 135 (DFPT…GEGN), 150 to 189 (CEQS…QLQN), 194 to 233 (EFDY…VMKT), and 291 to 330 (GHFG…FDFM).

The protein belongs to the eIF-3 subunit I family. In terms of assembly, component of the eukaryotic translation initiation factor 3 (eIF-3) complex.

The protein localises to the cytoplasm. Functionally, component of the eukaryotic translation initiation factor 3 (eIF-3) complex, which is involved in protein synthesis of a specialized repertoire of mRNAs and, together with other initiation factors, stimulates binding of mRNA and methionyl-tRNAi to the 40S ribosome. The eIF-3 complex specifically targets and initiates translation of a subset of mRNAs involved in cell proliferation. The chain is Eukaryotic translation initiation factor 3 subunit I from Coccidioides immitis (strain RS) (Valley fever fungus).